The primary structure comprises 137 residues: Protein Flattop homolog (137 aa).

Belongs to the Flattop family.

The protein resides in the cytoplasm. It localises to the cytoskeleton. The protein localises to the flagellum axoneme. Microtubule inner protein (MIP) part of the dynein-decorated doublet microtubules (DMTs) in cilia axoneme. Acts as a regulator of cilium basal body docking and positioning in mono- and multiciliated cells. Regulates basal body docking and cilia formation in multiciliated lung cells. Regulates kinocilium positioning and stereocilia bundle morphogenesis in the inner ear. This chain is Protein Flattop homolog, found in Chlamydomonas reinhardtii (Chlamydomonas smithii).